The sequence spans 210 residues: dITP/XTP pyrophosphatase (210 aa).

19-24 (SNNPGK) serves as a coordination point for substrate. Mg(2+) contacts are provided by Asp-51 and Asp-80. Asp-80 functions as the Proton acceptor in the catalytic mechanism. Substrate contacts are provided by residues Ser-81, 166–169 (FGYD), Lys-189, and 194–195 (HR).

The protein belongs to the HAM1 NTPase family. In terms of assembly, homodimer. It depends on Mg(2+) as a cofactor.

It carries out the reaction XTP + H2O = XMP + diphosphate + H(+). The catalysed reaction is dITP + H2O = dIMP + diphosphate + H(+). The enzyme catalyses ITP + H2O = IMP + diphosphate + H(+). Its function is as follows. Pyrophosphatase that catalyzes the hydrolysis of nucleoside triphosphates to their monophosphate derivatives, with a high preference for the non-canonical purine nucleotides XTP (xanthosine triphosphate), dITP (deoxyinosine triphosphate) and ITP. Seems to function as a house-cleaning enzyme that removes non-canonical purine nucleotides from the nucleotide pool, thus preventing their incorporation into DNA/RNA and avoiding chromosomal lesions. This chain is dITP/XTP pyrophosphatase, found in Burkholderia mallei (strain ATCC 23344).